A 138-amino-acid chain; its full sequence is MTFMTVQVVTPDGIRYDHHANFISVKTPDGEMGILPEHINLIAPLTVHEMKIHRTDDPNHVDWVAINGGIIEIKDNLVTIVADSAERERDIDVSRAERAKIRAERKLEQAQSTHDIDEVRRAQVALRRALNRISVGNK.

It belongs to the ATPase epsilon chain family. F-type ATPases have 2 components, CF(1) - the catalytic core - and CF(0) - the membrane proton channel. CF(1) has five subunits: alpha(3), beta(3), gamma(1), delta(1), epsilon(1). CF(0) has three main subunits: a, b and c.

It localises to the cell membrane. In terms of biological role, produces ATP from ADP in the presence of a proton gradient across the membrane. This chain is ATP synthase epsilon chain, found in Streptococcus equinus (Streptococcus bovis).